Consider the following 548-residue polypeptide: Methyl-accepting chemotaxis protein HlyB (548 aa).

The Cytoplasmic segment spans residues 1–10 (MIINKFSLKW). The chain crosses the membrane as a helical span at residues 11–31 (MLAIAVAIPAIALLFVAFTSL). The Periplasmic portion of the chain corresponds to 32 to 199 (NTMSVMQAQS…SFEAGRTKQM (168 aa)). The helical transmembrane segment at 200–220 (VIIAAGLIISFITSLVIITNL) threads the bilayer. In terms of domain architecture, HAMP spans 218–271 (TNLRSRVAYLKDRMSSAAANLSLRTRLELDGNDELCDIGKSFNAFIDKVHHSIE). Over 221–548 (RSRVAYLKDR…LDKLVGSFEL (328 aa)) the chain is Cytoplasmic. A Methyl-accepting transducer domain is found at 276 to 512 (NSKELATMAS…DINRNVEDIN (237 aa)).

Belongs to the methyl-accepting chemotaxis (MCP) protein family.

Its subcellular location is the cell inner membrane. Chemotactic-signal transducers respond to changes in the concentration of attractants and repellents in the environment, transduce a signal from the outside to the inside of the cell, and facilitate sensory adaptation through the variation of the level of methylation. This chain is Methyl-accepting chemotaxis protein HlyB (hlyB), found in Vibrio cholerae serotype O1 (strain ATCC 39315 / El Tor Inaba N16961).